The following is a 197-amino-acid chain: Recombination protein RecR (197 aa).

The C4-type zinc-finger motif lies at 56 to 71 (CSRCFNLSAEDPCDIC). The region spanning 79–174 (ETICVVAEPR…RVTRIAFGLP (96 aa)) is the Toprim domain.

The protein belongs to the RecR family.

Functionally, may play a role in DNA repair. It seems to be involved in an RecBC-independent recombinational process of DNA repair. It may act with RecF and RecO. The protein is Recombination protein RecR of Gloeobacter violaceus (strain ATCC 29082 / PCC 7421).